A 107-amino-acid polypeptide reads, in one-letter code: Phosphoribosyl-ATP pyrophosphatase (107 aa).

This sequence belongs to the PRA-PH family.

Its subcellular location is the cytoplasm. It catalyses the reaction 1-(5-phospho-beta-D-ribosyl)-ATP + H2O = 1-(5-phospho-beta-D-ribosyl)-5'-AMP + diphosphate + H(+). It functions in the pathway amino-acid biosynthesis; L-histidine biosynthesis; L-histidine from 5-phospho-alpha-D-ribose 1-diphosphate: step 2/9. This Caulobacter vibrioides (strain ATCC 19089 / CIP 103742 / CB 15) (Caulobacter crescentus) protein is Phosphoribosyl-ATP pyrophosphatase (hisE).